We begin with the raw amino-acid sequence, 78 residues long: Apolipoprotein C-I (78 aa).

The N-terminal stretch at 1–26 is a signal peptide; that stretch reads MRLILWLPVLVVVLLMVLEGPAPAQG.

This sequence belongs to the apolipoprotein C1 family.

It is found in the secreted. Inhibitor of lipoprotein binding to the low density lipoprotein (LDL) receptor, LDL receptor-related protein, and very low density lipoprotein (VLDL) receptor. Associates with high density lipoproteins (HDL) and the triacylglycerol-rich lipoproteins in the plasma and makes up about 10% of the protein of the VLDL and 2% of that of HDL. Appears to interfere directly with fatty acid uptake and is also the major plasma inhibitor of cholesteryl ester transfer protein (CETP). Binds free fatty acids and reduces their intracellular esterification. Modulates the interaction of APOE with beta-migrating VLDL and inhibits binding of beta-VLDL to the LDL receptor-related protein. The sequence is that of Apolipoprotein C-I (APOC1) from Lynx pardinus (Iberian lynx).